Consider the following 404-residue polypeptide: cAMP-dependent protein kinase regulatory subunit (404 aa).

The tract at residues L14–F144 is dimerization and phosphorylation. S105 bears the Phosphoserine mark. Residues L145–P276, E223, R232, C277–E398, E344, and R353 each bind 3',5'-cyclic AMP.

Belongs to the cAMP-dependent kinase regulatory chain family. As to quaternary structure, tetramer, composed of 2 regulatory (R) and 2 catalytic (C) subunits. In the presence of cAMP it dissociates into 2 active monomeric C subunits and an R dimer.

Functionally, cAMP-dependent protein kinase PKA regulatory subunit. The sequence is that of cAMP-dependent protein kinase regulatory subunit (PKAR) from Colletotrichum trifolii.